We begin with the raw amino-acid sequence, 103 residues long: Small ribosomal subunit protein uS10 (103 aa).

It belongs to the universal ribosomal protein uS10 family. As to quaternary structure, part of the 30S ribosomal subunit.

In terms of biological role, involved in the binding of tRNA to the ribosomes. This is Small ribosomal subunit protein uS10 from Neisseria gonorrhoeae (strain ATCC 700825 / FA 1090).